The chain runs to 870 residues: Leucine--tRNA ligase (870 aa).

The 'HIGH' region motif lies at 55–65 (PYPSGTLHMGH). The short motif at 626 to 630 (KMSKS) is the 'KMSKS' region element. K629 contributes to the ATP binding site.

The protein belongs to the class-I aminoacyl-tRNA synthetase family.

Its subcellular location is the cytoplasm. It carries out the reaction tRNA(Leu) + L-leucine + ATP = L-leucyl-tRNA(Leu) + AMP + diphosphate. The sequence is that of Leucine--tRNA ligase from Prochlorococcus marinus (strain SARG / CCMP1375 / SS120).